Consider the following 212-residue polypeptide: MRIKICGITQPDQGRAIATCGATALGFILVPSSPRYVKIEQINAITAAIPDKIDFIGVFADEQPEIIQQIIVKTPLTSVQLHGKESPEYCQRLRQLLPDREIIKALRIKDRESWEKSAIYFNSVDTLLLDAYHPQLLGGTGHTLDWQALASFSPPLPWFLAGGLNPDNISEALTRLHPQGIDVSSGVERSPGDKDLKKVALLLERLQKFRDQ.

Belongs to the TrpF family.

It carries out the reaction N-(5-phospho-beta-D-ribosyl)anthranilate = 1-(2-carboxyphenylamino)-1-deoxy-D-ribulose 5-phosphate. It functions in the pathway amino-acid biosynthesis; L-tryptophan biosynthesis; L-tryptophan from chorismate: step 3/5. In Microcystis aeruginosa (strain NIES-843 / IAM M-2473), this protein is N-(5'-phosphoribosyl)anthranilate isomerase.